Reading from the N-terminus, the 668-residue chain is Spartin (668 aa).

N-acetylmethionine is present on Met-1. The MIT domain occupies 16–94; it reads IKEAYKKAFV…LQNVRTRLEI (79 aa). The tract at residues 110-176 is disordered; it reads VPKLYPEFPP…PSEAPPAYTP (67 aa). The span at 118-127 shows a compositional bias: basic and acidic residues; it reads PPKDMSEKSP. A Phosphoserine modification is found at Ser-126. Low complexity predominate over residues 128-162; that stretch reads EPQSLSSLPQHSEVNGSTSTASAESSSTPTTLSLP. Residues 190 to 380 form a ubiquitin-binding region (UBR) domain region; it reads ESGEFSSVGE…QLDPSSKDVR (191 aa). Residues 193-200 carry the LC3-interacting region (LIR); mediates interaction with MAP1LC3A AND MAP1LC3C motif; sequence EFSSVGEN. Positions 348–396 are disordered; it reads FQIPGISGSASDQLKEASGTDVRQLDPSSKDVRQKGKRGKKTKGTSSEE. Residue Lys-362 forms a Glycyl lysine isopeptide (Lys-Gly) (interchain with G-Cter in ubiquitin) linkage. The region spanning 427–611 is the Senescence domain; the sequence is ILSGASWVSW…YNIDNIGIKA (185 aa). Residues 431 to 503 are required for localization to lipid droplets; it reads ASWVSWGLVK…LVDGVCTVAN (73 aa). Ser-470 is subject to Phosphoserine. Residues 631–668 are disordered; sequence IDNSKGENPGGGASANLKGEKDEQKEGPEKNGAKKKDK. Residues 648–668 show a composition bias toward basic and acidic residues; that stretch reads KGEKDEQKEGPEKNGAKKKDK.

Interacts with ITCH and WWP1. Interacts (via MIT domain) with IST1; leading to the recruitment of SPART to midbodies. Interacts with MAP1LC3A and MAP1LC3C. Ubiquitinated; ubiquitination does not require ITCH and WWP1.

The protein resides in the cytoplasm. Its subcellular location is the midbody. It is found in the lipid droplet. In terms of biological role, lipophagy receptor that plays an important role in lipid droplet (LD) turnover in motor neurons. Localizes to LDs and interacts with components of the autophagy machinery, such as MAP1LC3A/C proteins to deliver LDs to autophagosomes for degradation via lipophagy. Lipid transfer protein required for lipid droplet degradation, including by lipophagy. Can bind and transfer all lipid species found in lipid droplets, from phospholipids to triglycerides and sterol esters but the direction of lipid transfer by spartin and its cargos are unknown. May be implicated in endosomal trafficking, or microtubule dynamics, or both. Participates in cytokinesis. The chain is Spartin from Bos taurus (Bovine).